Reading from the N-terminus, the 682-residue chain is MNTSIPYQQSPYSPRGGSNVIQCYRCGDTCKGEVVRVHNNHFHIRCFTCQVCGCGLAQSGFFFKNQEYICTQDYQQLYGTRCDSCRDFITGEVISALGRTYHPKCFVCSLCRKPFPIGDKVTFSGKECVCQTCSQSMTSSKPIKIRGPSHCAGCKEEIKHGQSLLALDKQWHVSCFKCQTCSVILTGEYISKDGVPYCESDYHSQFGIKCETCDRYISGRVLEAGGKHYHPTCARCVRCHQMFTEGEEMYLTGSEVWHPICKQAARAEKKLKHRRTSETSISPPGSSIGSPNRVICAKVDNEILNYKDLAALPKVKSIYEVQRPDLISYEPHSRYTSDEMLERCGYGESLGTLSPYSQDIYENLDLRQRRASSPGYIDSPTYSRQGMSPTFSRSPHYYRSGPESGRSSPYHSQLDVRSSTPTSYQAPKHFHIPAGESNIYRKPPIYKRHGDLSTATKSKTSEDISQASKYSPAYSPDPYYASESEYWTYHGSPKVPRARRFSSGGEEEDFDRSMHKLQSGIGRLILKEEMKARSSSYADPWTPPRSSTSSREALHTTGYEMSFNGSPRSHYLADSDPLISKSASLPAYRRNGLHRTPSADLFHYDSMNAVNWGMREYKIYPYELLLVTTRGRNRLPKDVDRTRLERHLSQEEFYQVFGMTISEFERLALWKRNELKKQARLF.

Residue Met1 is modified to N-acetylmethionine. 4 LIM zinc-binding domains span residues 21 to 80 (IQCY…LYGT), 80 to 140 (TRCD…MTSS), 149 to 208 (SHCA…QFGI), and 208 to 268 (IKCE…ARAE). Residues Ser277, Ser280, Ser282, Ser286, Ser290, Ser337, Ser372, and Ser373 each carry the phosphoserine modification. Disordered stretches follow at residues 372–426 (SSPG…SYQA) and 440–475 (YRKPPIYKRHGDLSTATKSKTSEDISQASKYSPAYS). At Tyr376 the chain carries Phosphotyrosine. A phosphoserine mark is found at Ser379 and Ser388. Composition is skewed to polar residues over residues 380–393 (PTYSRQGMSPTFSR), 405–425 (GRSSPYHSQLDVRSSTPTSYQ), and 453–466 (STATKSKTSEDISQ). Phosphoserine occurs at positions 492, 502, and 503. At Thr542 the chain carries Phosphothreonine. Residues Ser566, Ser575, and Ser606 each carry the phosphoserine modification. The HP domain maps to 614-682 (MREYKIYPYE…NELKKQARLF (69 aa)). The residue at position 630 (Arg630) is an Omega-N-methylarginine.

In terms of assembly, directly interacts with F-actin and ABRA. As to expression, expressed in heart, brain, lung and liver. In the brain, highly expressed in the olfactory bulb. In the hippocampus, expressed selectively in the CA2 and CA3 fields. In the cerebellum, expressed in internal granular cells.

It localises to the cytoplasm. In terms of biological role, may act as scaffold protein. May stimulate ABRA activity and ABRA-dependent SRF transcriptional activity. The polypeptide is Actin-binding LIM protein 3 (Ablim3) (Mus musculus (Mouse)).